A 425-amino-acid polypeptide reads, in one-letter code: Cyanogenic beta-glucosidase (425 aa).

The signal sequence occupies residues 1–11; sequence LLSITTTHIHA. A beta-D-glucoside is bound by residues Q44, H148, and 193–194; that span reads NE. Residue E194 is the Proton donor of the active site. A disulfide bridge connects residues C213 and C221. The N-linked (GlcNAc...) asparagine glycan is linked to N220. A beta-D-glucoside contacts are provided by Y337 and E408. E408 serves as the catalytic Nucleophile. The N-linked (GlcNAc...) asparagine glycan is linked to N412.

Belongs to the glycosyl hydrolase 1 family. In terms of assembly, homodimer. In terms of tissue distribution, leaves.

It carries out the reaction Hydrolysis of terminal, non-reducing beta-D-glucosyl residues with release of beta-D-glucose.. Its function is as follows. Hydrolyzes cyanoglucosides, contributing to the release of hydrocyanic acid, which functions as a defense mechanism against small predators, when the leaf tissue is damaged. The protein is Cyanogenic beta-glucosidase (LI) of Trifolium repens (Creeping white clover).